Here is a 291-residue protein sequence, read N- to C-terminus: ATP synthase gamma chain (291 aa).

The protein belongs to the ATPase gamma chain family. As to quaternary structure, F-type ATPases have 2 components, CF(1) - the catalytic core - and CF(0) - the membrane proton channel. CF(1) has five subunits: alpha(3), beta(3), gamma(1), delta(1), epsilon(1). CF(0) has three main subunits: a, b and c.

It localises to the cell inner membrane. Its function is as follows. Produces ATP from ADP in the presence of a proton gradient across the membrane. The gamma chain is believed to be important in regulating ATPase activity and the flow of protons through the CF(0) complex. This Burkholderia lata (strain ATCC 17760 / DSM 23089 / LMG 22485 / NCIMB 9086 / R18194 / 383) protein is ATP synthase gamma chain.